Here is a 339-residue protein sequence, read N- to C-terminus: NADH-quinone oxidoreductase subunit H (339 aa).

8 helical membrane-spanning segments follow: residues 7–27, 77–97, 112–132, 149–169, 180–200, 235–255, 276–296, and 315–335; these read LFWI…AVAY, VLFV…WAVI, LLYI…AGWA, VVSY…AAGS, AGGI…VYWI, VFFL…AVMF, VPGV…YLWF, and VLIP…VTGF.

It belongs to the complex I subunit 1 family. In terms of assembly, NDH-1 is composed of 14 different subunits. Subunits NuoA, H, J, K, L, M, N constitute the membrane sector of the complex.

It localises to the cell inner membrane. It catalyses the reaction a quinone + NADH + 5 H(+)(in) = a quinol + NAD(+) + 4 H(+)(out). Its function is as follows. NDH-1 shuttles electrons from NADH, via FMN and iron-sulfur (Fe-S) centers, to quinones in the respiratory chain. The immediate electron acceptor for the enzyme in this species is believed to be ubiquinone. Couples the redox reaction to proton translocation (for every two electrons transferred, four hydrogen ions are translocated across the cytoplasmic membrane), and thus conserves the redox energy in a proton gradient. This subunit may bind ubiquinone. The protein is NADH-quinone oxidoreductase subunit H of Alkalilimnicola ehrlichii (strain ATCC BAA-1101 / DSM 17681 / MLHE-1).